We begin with the raw amino-acid sequence, 179 residues long: Large ribosomal subunit protein uL5 (179 aa).

This sequence belongs to the universal ribosomal protein uL5 family. Part of the 50S ribosomal subunit; part of the 5S rRNA/L5/L18/L25 subcomplex. Contacts the 5S rRNA and the P site tRNA. Forms a bridge to the 30S subunit in the 70S ribosome.

This is one of the proteins that bind and probably mediate the attachment of the 5S RNA into the large ribosomal subunit, where it forms part of the central protuberance. In the 70S ribosome it contacts protein S13 of the 30S subunit (bridge B1b), connecting the 2 subunits; this bridge is implicated in subunit movement. Contacts the P site tRNA; the 5S rRNA and some of its associated proteins might help stabilize positioning of ribosome-bound tRNAs. This is Large ribosomal subunit protein uL5 from Ruthia magnifica subsp. Calyptogena magnifica.